A 306-amino-acid polypeptide reads, in one-letter code: 4-hydroxy-3-methylbut-2-enyl diphosphate reductase (306 aa).

C12 lines the [4Fe-4S] cluster pocket. (2E)-4-hydroxy-3-methylbut-2-enyl diphosphate is bound by residues H41 and H74. 2 residues coordinate dimethylallyl diphosphate: H41 and H74. Residues H41 and H74 each contribute to the isopentenyl diphosphate site. C96 contacts [4Fe-4S] cluster. Position 124 (H124) interacts with (2E)-4-hydroxy-3-methylbut-2-enyl diphosphate. A dimethylallyl diphosphate-binding site is contributed by H124. Residue H124 coordinates isopentenyl diphosphate. The active-site Proton donor is E126. A (2E)-4-hydroxy-3-methylbut-2-enyl diphosphate-binding site is contributed by T164. C194 contributes to the [4Fe-4S] cluster binding site. Residues S222, S223, N224, and S266 each coordinate (2E)-4-hydroxy-3-methylbut-2-enyl diphosphate. The dimethylallyl diphosphate site is built by S222, S223, N224, and S266. Residues S222, S223, N224, and S266 each coordinate isopentenyl diphosphate.

It belongs to the IspH family. [4Fe-4S] cluster is required as a cofactor.

It catalyses the reaction isopentenyl diphosphate + 2 oxidized [2Fe-2S]-[ferredoxin] + H2O = (2E)-4-hydroxy-3-methylbut-2-enyl diphosphate + 2 reduced [2Fe-2S]-[ferredoxin] + 2 H(+). The enzyme catalyses dimethylallyl diphosphate + 2 oxidized [2Fe-2S]-[ferredoxin] + H2O = (2E)-4-hydroxy-3-methylbut-2-enyl diphosphate + 2 reduced [2Fe-2S]-[ferredoxin] + 2 H(+). Its pathway is isoprenoid biosynthesis; dimethylallyl diphosphate biosynthesis; dimethylallyl diphosphate from (2E)-4-hydroxy-3-methylbutenyl diphosphate: step 1/1. It participates in isoprenoid biosynthesis; isopentenyl diphosphate biosynthesis via DXP pathway; isopentenyl diphosphate from 1-deoxy-D-xylulose 5-phosphate: step 6/6. In terms of biological role, catalyzes the conversion of 1-hydroxy-2-methyl-2-(E)-butenyl 4-diphosphate (HMBPP) into a mixture of isopentenyl diphosphate (IPP) and dimethylallyl diphosphate (DMAPP). Acts in the terminal step of the DOXP/MEP pathway for isoprenoid precursor biosynthesis. The polypeptide is 4-hydroxy-3-methylbut-2-enyl diphosphate reductase (Ruthia magnifica subsp. Calyptogena magnifica).